Here is a 409-residue protein sequence, read N- to C-terminus: DNA double-strand break repair protein Mre11 (409 aa).

Positions 9, 11, 50, and 85 each coordinate Mn(2+). Catalysis depends on H86, which acts as the Proton donor. Mn(2+)-binding residues include H170, H199, and H201.

This sequence belongs to the MRE11/RAD32 family. In terms of assembly, homodimer. Forms a heterotetramer composed of two Mre11 subunits and two Rad50 subunits. It depends on Mn(2+) as a cofactor.

Nuclease activity is regulated by Rad50. Its function is as follows. Part of the Rad50/Mre11 complex, which is involved in the early steps of DNA double-strand break (DSB) repair. The complex may facilitate opening of the processed DNA ends to aid in the recruitment of HerA and NurA. Mre11 binds to DSB ends and has both double-stranded 3'-5' exonuclease activity and single-stranded endonuclease activity. The chain is DNA double-strand break repair protein Mre11 from Aeropyrum pernix (strain ATCC 700893 / DSM 11879 / JCM 9820 / NBRC 100138 / K1).